The following is a 349-amino-acid chain: Sperm acrosomal protein FSA-ACR.1 (349 aa).

The signal sequence occupies residues 1–8; that stretch reads MKEVYLVG. The interval 1–265 is disordered; that stretch reads MKEVYLVGYA…EQPSGIPPSS (265 aa). Over residues 63-114 the composition is skewed to basic and acidic residues; that stretch reads TSGEHTSVEHASAEHSSTEHTSGEHASGEHTSGERATGEHTSSEHATSEHTS. Polar residues-rich tracts occupy residues 117–142 and 154–171; these read QPSGEQPSGEKSSGEQPSGEKSSGEQ and SGEQSSGEKSSAEQTSGE. Basic and acidic residues predominate over residues 178–189; the sequence is PSGEHAVAEKPS. Residues 221-248 are compositionally biased toward low complexity; sequence EQASIEKASSEQASAEQASAEQASSEQA. N342 carries an N-linked (GlcNAc...) asparagine glycan.

The protein to acrosomal proteins SP-10. As to expression, testis.

It localises to the cytoplasmic vesicle. The protein localises to the secretory vesicle. It is found in the acrosome. The polypeptide is Sperm acrosomal protein FSA-ACR.1 (Vulpes vulpes (Red fox)).